A 554-amino-acid polypeptide reads, in one-letter code: Formate--tetrahydrofolate ligase (554 aa).

Residue 65–72 (TPLGEGKT) participates in ATP binding.

It belongs to the formate--tetrahydrofolate ligase family.

The catalysed reaction is (6S)-5,6,7,8-tetrahydrofolate + formate + ATP = (6R)-10-formyltetrahydrofolate + ADP + phosphate. The protein operates within one-carbon metabolism; tetrahydrofolate interconversion. This chain is Formate--tetrahydrofolate ligase, found in Aliivibrio salmonicida (strain LFI1238) (Vibrio salmonicida (strain LFI1238)).